The primary structure comprises 211 residues: Arginine exporter protein ArgO (211 aa).

The next 6 membrane-spanning stretches (helical) occupy residues 1-21 (MLSY…PLGP), 37-57 (LMIA…GIFG), 68-88 (LLAL…FGAL), 111-131 (IIAT…DTFV), 147-167 (WFAL…ALLA), and 186-206 (LVGL…IHHI).

The protein belongs to the LysE/ArgO transporter (TC 2.A.75) family.

The protein localises to the cell inner membrane. It carries out the reaction L-arginine(in) = L-arginine(out). Functionally, involved in the export of arginine. Important to control the intracellular level of arginine and the correct balance between arginine and lysine. This Enterobacter sp. (strain 638) protein is Arginine exporter protein ArgO.